The following is a 320-amino-acid chain: 4-hydroxythreonine-4-phosphate dehydrogenase (320 aa).

Residue Thr-132 participates in substrate binding. His-161, His-205, and His-258 together coordinate a divalent metal cation. Residues Lys-266, Asn-275, and Arg-284 each contribute to the substrate site.

It belongs to the PdxA family. As to quaternary structure, homodimer. A divalent metal cation serves as cofactor.

It is found in the cytoplasm. The catalysed reaction is 4-(phosphooxy)-L-threonine + NAD(+) = 3-amino-2-oxopropyl phosphate + CO2 + NADH. It functions in the pathway cofactor biosynthesis; pyridoxine 5'-phosphate biosynthesis; pyridoxine 5'-phosphate from D-erythrose 4-phosphate: step 4/5. Functionally, catalyzes the NAD(P)-dependent oxidation of 4-(phosphooxy)-L-threonine (HTP) into 2-amino-3-oxo-4-(phosphooxy)butyric acid which spontaneously decarboxylates to form 3-amino-2-oxopropyl phosphate (AHAP). In Aquifex aeolicus (strain VF5), this protein is 4-hydroxythreonine-4-phosphate dehydrogenase.